Consider the following 137-residue polypeptide: Small ribosomal subunit protein uS11 (137 aa).

Residues 1 to 30 (MAQAKKGGAPKKGQKTRRREKKNVPHGAAH) are disordered. Residues 8 to 21 (GAPKKGQKTRRREK) are compositionally biased toward basic residues.

It belongs to the universal ribosomal protein uS11 family. As to quaternary structure, part of the 30S ribosomal subunit. Interacts with proteins S7 and S18. Binds to IF-3.

Located on the platform of the 30S subunit, it bridges several disparate RNA helices of the 16S rRNA. Forms part of the Shine-Dalgarno cleft in the 70S ribosome. The sequence is that of Small ribosomal subunit protein uS11 from Mycolicibacterium vanbaalenii (strain DSM 7251 / JCM 13017 / BCRC 16820 / KCTC 9966 / NRRL B-24157 / PYR-1) (Mycobacterium vanbaalenii).